Here is a 295-residue protein sequence, read N- to C-terminus: Mediator of RNA polymerase II transcription subunit 6 (295 aa).

The segment at 211 to 243 (TATAATNGNNAGGGSNKSSVRPTGGANMATVPS) is disordered. S225 is modified (phosphoserine).

The protein belongs to the Mediator complex subunit 6 family. In terms of assembly, component of the Mediator complex, which is composed of at least 21 subunits that form three structurally distinct submodules. The Mediator head module contains MED6, MED8, MED11, SRB4/MED17, SRB5/MED18, ROX3/MED19, SRB2/MED20 and SRB6/MED22, the middle module contains MED1, MED4, NUT1/MED5, MED7, CSE2/MED9, NUT2/MED10, SRB7/MED21 and SOH1/MED31, and the tail module contains MED2, PGD1/MED3, RGR1/MED14, GAL11/MED15 and SIN4/MED16. The head and the middle modules interact directly with RNA polymerase II, whereas the elongated tail module interacts with gene-specific regulatory proteins. MED6 interacts directly with SRB4/MED17 and SRB7/MED21.

Its subcellular location is the nucleus. Its function is as follows. Component of the Mediator complex, a coactivator involved in the regulated transcription of nearly all RNA polymerase II-dependent genes. Mediator functions as a bridge to convey information from gene-specific regulatory proteins to the basal RNA polymerase II transcription machinery. The Mediator complex, having a compact conformation in its free form, is recruited to promoters by direct interactions with regulatory proteins and serves for the assembly of a functional preinitiation complex with RNA polymerase II and the general transcription factors. The Mediator complex unfolds to an extended conformation and partially surrounds RNA polymerase II, specifically interacting with the unphosphorylated form of the C-terminal domain (CTD) of RNA polymerase II. The Mediator complex dissociates from the RNA polymerase II holoenzyme and stays at the promoter when transcriptional elongation begins. The protein is Mediator of RNA polymerase II transcription subunit 6 (MED6) of Saccharomyces cerevisiae (strain ATCC 204508 / S288c) (Baker's yeast).